Reading from the N-terminus, the 133-residue chain is Maturin (133 aa).

This sequence belongs to the MTURN family.

It localises to the cytoplasm. May be involved in early neuronal development. May play a role in promoting megakaryocyte differentiation. The protein is Maturin (mturn) of Danio rerio (Zebrafish).